A 344-amino-acid polypeptide reads, in one-letter code: Large ribosomal subunit protein uL3 (344 aa).

Belongs to the universal ribosomal protein uL3 family. As to quaternary structure, part of the 50S ribosomal subunit. Forms a cluster with proteins L14 and L24e.

One of the primary rRNA binding proteins, it binds directly near the 3'-end of the 23S rRNA, where it nucleates assembly of the 50S subunit. The sequence is that of Large ribosomal subunit protein uL3 from Aeropyrum pernix (strain ATCC 700893 / DSM 11879 / JCM 9820 / NBRC 100138 / K1).